The chain runs to 252 residues: Trans-aconitate 2-methyltransferase (252 aa).

This sequence belongs to the methyltransferase superfamily. Tam family.

It is found in the cytoplasm. It carries out the reaction trans-aconitate + S-adenosyl-L-methionine = (E)-3-(methoxycarbonyl)pent-2-enedioate + S-adenosyl-L-homocysteine. Functionally, catalyzes the S-adenosylmethionine monomethyl esterification of trans-aconitate. In Escherichia fergusonii (strain ATCC 35469 / DSM 13698 / CCUG 18766 / IAM 14443 / JCM 21226 / LMG 7866 / NBRC 102419 / NCTC 12128 / CDC 0568-73), this protein is Trans-aconitate 2-methyltransferase.